Consider the following 89-residue polypeptide: Small ribosomal subunit protein uS14 (89 aa).

It belongs to the universal ribosomal protein uS14 family. In terms of assembly, part of the 30S ribosomal subunit. Contacts proteins S3 and S10.

In terms of biological role, binds 16S rRNA, required for the assembly of 30S particles and may also be responsible for determining the conformation of the 16S rRNA at the A site. This chain is Small ribosomal subunit protein uS14, found in Chlorobaculum parvum (strain DSM 263 / NCIMB 8327) (Chlorobium vibrioforme subsp. thiosulfatophilum).